The chain runs to 365 residues: Membrane cofactor protein (365 aa).

Positions 1–44 are cleaved as a signal peptide; it reads MTAAPLMPDSTHPCRRRKSYTFFWCSLGVYAEALLFLLSHLSDA. Sushi domains follow at residues 45 to 106, 107 to 170, 171 to 236, and 237 to 296; these read CELP…GCIK, VQCT…HCEK, IYCL…ECKV, and VKCP…KCLK. The Extracellular segment spans residues 45 to 329; that stretch reads CELPRPFEAM…GIFSQELDAW (285 aa). 6 cysteine pairs are disulfide-bonded: C109-C151, C137-C168, C173-C221, C202-C234, C239-C281, and C267-C294. The N-linked (GlcNAc...) asparagine glycan is linked to N181. A glycan (O-linked (GalNAc...) threonine) is linked at T205. T301 and T304 each carry an O-linked (GalNAc...) threonine glycan. N-linked (GlcNAc...) asparagine glycosylation occurs at N310. O-linked (GalNAc...) threonine glycosylation is present at T312. A helical membrane pass occupies residues 330 to 350; that stretch reads IIALIVITSIVGVFILCLIVL. The Cytoplasmic portion of the chain corresponds to 351 to 365; that stretch reads RCFEHRKKTNVSAAR.

Interacts with C3b. Interacts with C4b. Interacts with moesin/MSN. May be O-glycosylated. In terms of processing, N-glycosylated. Present only in testis (at protein level).

The protein localises to the cytoplasmic vesicle. It is found in the secretory vesicle. The protein resides in the acrosome inner membrane. Its subcellular location is the secreted. Functionally, may be involved in the fusion of the spermatozoa with the oocyte during fertilization. This Mus musculus (Mouse) protein is Membrane cofactor protein (Cd46).